The sequence spans 267 residues: Large ribosomal subunit protein bL9m (267 aa).

The N-terminal 52 residues, 1 to 52 (MAAPVVTAPGRALLRAGAGRLLRGGVQELLRPRHEGNAPDLACNFSLSQNRG), are a transit peptide targeting the mitochondrion.

This sequence belongs to the bacterial ribosomal protein bL9 family. As to quaternary structure, component of the mitochondrial large ribosomal subunit (mt-LSU). Mature mammalian 55S mitochondrial ribosomes consist of a small (28S) and a large (39S) subunit. The 28S small subunit contains a 12S ribosomal RNA (12S mt-rRNA) and 30 different proteins. The 39S large subunit contains a 16S rRNA (16S mt-rRNA), a copy of mitochondrial valine transfer RNA (mt-tRNA(Val)), which plays an integral structural role, and 52 different proteins.

It is found in the mitochondrion. The chain is Large ribosomal subunit protein bL9m (MRPL9) from Homo sapiens (Human).